A 334-amino-acid polypeptide reads, in one-letter code: UL-16 binding protein 5 (334 aa).

A signal peptide spans 1 to 25 (MAAAASPAFLLRLPLLLLLSSWCRT). Residues 26 to 223 (GLADPHSLCY…TMSSGTAQPR (198 aa)) lie on the Extracellular side of the membrane. Positions 29–117 (DPHSLCYDIT…IQLENYIPKE (89 aa)) are MHC class I alpha-1 like. A disulfide bridge connects residues cysteine 50 and cysteine 66. An N-linked (GlcNAc...) asparagine glycan is attached at asparagine 82. Positions 118 to 210 (PLTLQARMSC…MDSTLEPSAG (93 aa)) are MHC class I alpha-2 like. A disulfide bond links cysteine 127 and cysteine 190. The GPI-anchor amidated glycine moiety is linked to residue glycine 218. Residues 219–334 (TAQPRATATT…YSEPLQVSIS (116 aa)) constitute a propeptide, removed in mature form. A helical transmembrane segment spans residues 224–243 (ATATTLILCCLLIMCLLICS). Topologically, residues 244–334 (RHSLTQSHGH…YSEPLQVSIS (91 aa)) are cytoplasmic.

Belongs to the MHC class I family. In terms of assembly, interacts with KLRK1/NKG2D. As to quaternary structure, (Microbial infection) In CMV-infected cells, interacts with the viral glycoprotein UL16; this interaction causes RAET1G retention in the endoplasmic reticulum and cis-Golgi and prevents binding to and activation of KLRK1/NKG2D, providing CMV with an immune evasion mechanism. The functional form is cleaved C-terminally of the GPI-anchor and yields a 28 kDa protein. As to expression, isoform 1 is highly expressed in colon and in a number of tumor cell lines and highly restricted in normal tissues. Both isoforms are frequently expressed in cell lines derived from epithelial cancers, and in primary breast cancers.

The protein resides in the cell membrane. The protein localises to the endoplasmic reticulum. It localises to the secreted. Functionally, binds and activates the KLRK1/NKG2D receptor, mediating natural killer cell cytotoxicity. Down-regulates the expression of KLRK1 and stimulates natural killer cells to secrete IFNG. In terms of biological role, stimulates natural killer cells to secrete IFNG. This is UL-16 binding protein 5 from Homo sapiens (Human).